Here is a 650-residue protein sequence, read N- to C-terminus: Chaperone protein DnaK (650 aa).

Position 200 is a phosphothreonine; by autocatalysis (T200). Over residues Q613 to Q634 the composition is skewed to low complexity. The disordered stretch occupies residues Q613–D637.

It belongs to the heat shock protein 70 family.

In terms of biological role, acts as a chaperone. The chain is Chaperone protein DnaK from Burkholderia thailandensis (strain ATCC 700388 / DSM 13276 / CCUG 48851 / CIP 106301 / E264).